The primary structure comprises 79 residues: Sulfur carrier protein TusA (79 aa).

The active-site Cysteine persulfide intermediate is the cysteine 16.

This sequence belongs to the sulfur carrier protein TusA family.

It localises to the cytoplasm. Its function is as follows. Sulfur carrier protein which probably makes part of a sulfur-relay system. This chain is Sulfur carrier protein TusA, found in Pseudomonas paraeruginosa (strain DSM 24068 / PA7) (Pseudomonas aeruginosa (strain PA7)).